Here is a 6061-residue protein sequence, read N- to C-terminus: Intermembrane lipid transfer protein vps13B (6061 aa).

The region spanning 2-115 is the Chorein N-terminal domain; sequence FESLVADIIA…QLELKRKKLE (114 aa). 17 disordered regions span residues 590–623, 803–828, 1386–1414, 1604–1644, 2747–2784, 2950–2972, 3364–3401, 3855–3876, 4011–4068, 4107–4132, 4262–4297, 4321–4442, 4601–4631, 4753–4797, 4861–4882, 5003–5030, and 5372–5429; these read PKYKRHQENKENKENQENQENENKNEINNNNNNK, DIKNSDNNNNNISDNINNNNNINNKN, QQQQQQEEEQQQKEEEQHGGEFDLQNVSS, SSNN…GTLS, QTNQNNQKNRNPFKFYDQSGASNNNNDNDNDEYDEDQE, GLNNSFDLNNSGGGNNNNNNSST, LNRNSNSDSDNEENHNNNQNNQNNIDDDDGDGDDDDDD, QQQQPIINGDYGGIDSNNRNKK, QQQQ…FKNN, ELEKKKRERKENSKSKSLVAPDRPDE, NSSNNNNNNNNNGLSASTSNNLNNTMNDSNNNYNGR, SQSI…TSPG, TSSPSSSSNKVNNNYNNMDDEEDKKISKKSL, NNNN…TQEF, NAGGSSHYSSNGSNGSFSSISQ, LATKGKDNNKDNSNNNNNNNNNNNDGIE, and NINN…IGQD. The segment covering 595–614 has biased composition (basic and acidic residues); that stretch reads HQENKENKENQENQENENKN. Residues 1395–1406 show a composition bias toward basic and acidic residues; it reads QQQKEEEQHGGE. The segment covering 2747 to 2756 has biased composition (polar residues); it reads QTNQNNQKNR. The span at 2774 to 2784 shows a compositional bias: acidic residues; sequence NDNDEYDEDQE. The span at 3388–3401 shows a compositional bias: acidic residues; sequence IDDDDGDGDDDDDD. A compositionally biased stretch (basic and acidic residues) spans 4015–4024; that stretch reads QEKEKEIEKE. Residues 4031–4040 show a composition bias toward low complexity; that stretch reads LKNNNNISIN. The span at 4041 to 4057 shows a compositional bias: acidic residues; it reads DNDDDDDDDDNDNDENN. A compositionally biased stretch (low complexity) spans 4058 to 4068; it reads NENYEFNFKNN. Basic and acidic residues predominate over residues 4107 to 4120; it reads ELEKKKRERKENSK. Low complexity-rich tracts occupy residues 4330–4383 and 4399–4429; these read TTTT…VGSN and NNNNNNNNNNNNNNNNNNNNNNNNNNNNNNN. Residues 4430 to 4441 show a composition bias toward polar residues; the sequence is SNDNQVNFSTSP. Composition is skewed to low complexity over residues 4601–4617 and 4753–4784; these read TSSPSSSSNKVNNNYNN and NNNNNNNDVNNNNTNNNNNNNNNNNNNKSNEN. Residues 4785 to 4794 show a composition bias toward polar residues; that stretch reads SQDQPPSIKT. Composition is skewed to low complexity over residues 5013–5030 and 5372–5384; these read DNSNNNNNNNNNNNDGIE and NINNNNNNLNNDN. Over residues 5385–5409 the composition is skewed to basic and acidic residues; it reads NKNKNNNDKNKNNDKNNKNNNDKNN. Over residues 5410–5421 the composition is skewed to low complexity; it reads NDNNNNNNNNNN.

The protein belongs to the VPS13 family.

The protein localises to the membrane. Its function is as follows. Mediates the transfer of lipids between membranes at organelle contact sites. This chain is Intermembrane lipid transfer protein vps13B (vps13B), found in Dictyostelium discoideum (Social amoeba).